The chain runs to 547 residues: Cytochrome P450 monooxygenase 128 (547 aa).

Residues 9 to 25 traverse the membrane as a helical segment; sequence IPWAAGATLLAWAAYKI. Residues Asn336 and Asn438 are each glycosylated (N-linked (GlcNAc...) asparagine). Position 483 (Cys483) interacts with heme.

Belongs to the cytochrome P450 family. Requires heme as cofactor.

It is found in the membrane. It functions in the pathway secondary metabolite biosynthesis. In terms of biological role, cytochrome P450 monooxygenase that is able to use 7-ethoxycoumarin and testosterone as substrates for oxidation. This is Cytochrome P450 monooxygenase 128 from Postia placenta (strain ATCC 44394 / Madison 698-R) (Brown rot fungus).